The chain runs to 65 residues: UPF0337 protein BCE_1081 (65 aa).

The interval methionine 1–threonine 28 is disordered. The span at lysine 12–threonine 28 shows a compositional bias: basic and acidic residues.

This sequence belongs to the UPF0337 (CsbD) family.

The polypeptide is UPF0337 protein BCE_1081 (Bacillus cereus (strain ATCC 10987 / NRS 248)).